A 433-amino-acid chain; its full sequence is Homoserine dehydrogenase (433 aa).

Threonine 13 and valine 14 together coordinate NADPH. 2 residues coordinate NAD(+): valine 14 and valine 33. Valine 14 contacts NADP(+). NADPH is bound by residues lysine 45 and lysine 105. Residues lysine 45 and lysine 105 each coordinate NADP(+). Residues glutamate 129, valine 132, glycine 134, and isoleucine 136 each contribute to the Na(+) site. The NADP(+) site is built by glycine 187 and glutamate 190. L-homoserine is bound by residues glutamate 190 and aspartate 201. Lysine 205 serves as the catalytic Proton donor. Glycine 302 is an NADPH binding site. Glycine 302 is an NAD(+) binding site. Glycine 302 is an NADP(+) binding site. Residues 350–426 (FLRIHVKDEV…VVQEVKSTYR (77 aa)) form the ACT domain.

The protein belongs to the homoserine dehydrogenase family. Homotetramer. It depends on a metal cation as a cofactor.

The protein resides in the cytoplasm. It localises to the secreted. The catalysed reaction is L-homoserine + NADP(+) = L-aspartate 4-semialdehyde + NADPH + H(+). The protein operates within amino-acid biosynthesis; L-methionine biosynthesis via de novo pathway; L-homoserine from L-aspartate: step 3/3. Its pathway is amino-acid biosynthesis; L-threonine biosynthesis; L-threonine from L-aspartate: step 3/5. Its activity is regulated as follows. Feedback inhibition by threonine. Activated by sodium ions. Its function is as follows. Catalyzes the conversion of L-aspartate-beta-semialdehyde (L-Asa) to L-homoserine (L-Hse), the third step in the biosynthesis of threonine and methionine from aspartate. Utilizes NADPH but not NADH as coenzyme. The polypeptide is Homoserine dehydrogenase (hom) (Bacillus subtilis (strain 168)).